Consider the following 472-residue polypeptide: Chitobiosyldiphosphodolichol beta-mannosyltransferase (472 aa).

At 1–20 the chain is on the lumenal side; that stretch reads MEEFQFIKYKGFDHVFKYSG. A helical transmembrane segment spans residues 21–41; sequence PWLWWLVGFYLCLPILAYTLL. At 42–118 the chain is on the cytoplasmic side; it reads PYLTMNGTIS…PITVTKNTSN (77 aa). Positions 119–139 form an intramembrane region, helical; it reads LPFILFAAKKMVVQFFQLLKL. Topologically, residues 140 to 472 are cytoplasmic; sequence LSDFRGTDYV…MGKRFEYSTD (333 aa).

Belongs to the glycosyltransferase group 1 family.

The protein localises to the endoplasmic reticulum membrane. The catalysed reaction is an N,N'-diacetylchitobiosyl-diphospho-di-trans,poly-cis-dolichol + GDP-alpha-D-mannose = a beta-D-Man-(1-&gt;4)-beta-D-GlcNAc-(1-&gt;4)-alpha-D-GlcNAc-diphospho-di-trans,poly-cis-dolichol + GDP + H(+). It participates in protein modification; protein glycosylation. In terms of biological role, participates in the formation of the lipid-linked precursor oligosaccharide for N-glycosylation. Involved in assembling the dolichol-pyrophosphate-GlcNAc(2)-Man(5) intermediate on the cytoplasmic surface of the ER. The sequence is that of Chitobiosyldiphosphodolichol beta-mannosyltransferase (ALG1) from Debaryomyces hansenii (strain ATCC 36239 / CBS 767 / BCRC 21394 / JCM 1990 / NBRC 0083 / IGC 2968) (Yeast).